A 225-amino-acid polypeptide reads, in one-letter code: Protein-L-isoaspartate O-methyltransferase (225 aa).

Ser-75 is an active-site residue.

This sequence belongs to the methyltransferase superfamily. L-isoaspartyl/D-aspartyl protein methyltransferase family.

The protein resides in the cytoplasm. The enzyme catalyses [protein]-L-isoaspartate + S-adenosyl-L-methionine = [protein]-L-isoaspartate alpha-methyl ester + S-adenosyl-L-homocysteine. In terms of biological role, catalyzes the methyl esterification of L-isoaspartyl residues in peptides and proteins that result from spontaneous decomposition of normal L-aspartyl and L-asparaginyl residues. It plays a role in the repair and/or degradation of damaged proteins. This Xylella fastidiosa (strain M23) protein is Protein-L-isoaspartate O-methyltransferase.